Reading from the N-terminus, the 188-residue chain is Elongation factor P (188 aa).

Lys34 carries the post-translational modification N6-(3,6-diaminohexanoyl)-5-hydroxylysine.

The protein belongs to the elongation factor P family. May be beta-lysylated on the epsilon-amino group of Lys-34 by the combined action of EpmA and EpmB, and then hydroxylated on the C5 position of the same residue by EpmC (if this protein is present). Lysylation is critical for the stimulatory effect of EF-P on peptide-bond formation. The lysylation moiety may extend toward the peptidyltransferase center and stabilize the terminal 3-CCA end of the tRNA. Hydroxylation of the C5 position on Lys-34 may allow additional potential stabilizing hydrogen-bond interactions with the P-tRNA.

The protein resides in the cytoplasm. It participates in protein biosynthesis; polypeptide chain elongation. Functionally, involved in peptide bond synthesis. Alleviates ribosome stalling that occurs when 3 or more consecutive Pro residues or the sequence PPG is present in a protein, possibly by augmenting the peptidyl transferase activity of the ribosome. Modification of Lys-34 is required for alleviation. The polypeptide is Elongation factor P (Photorhabdus laumondii subsp. laumondii (strain DSM 15139 / CIP 105565 / TT01) (Photorhabdus luminescens subsp. laumondii)).